Consider the following 22-residue polypeptide: Melittin-like peptide (22 aa).

Q22 carries the glutamine amide modification.

Expressed by the skin dorsal glands.

The protein resides in the secreted. The sequence is that of Melittin-like peptide from Rana temporaria (European common frog).